Here is a 336-residue protein sequence, read N- to C-terminus: Fructose-1,6-bisphosphatase class 1 (336 aa).

Positions 90, 112, 114, and 115 each coordinate Mg(2+). Residues D115–S118, N211, and K277 contribute to the substrate site. A Mg(2+)-binding site is contributed by E283.

Belongs to the FBPase class 1 family. As to quaternary structure, homotetramer. Mg(2+) serves as cofactor.

Its subcellular location is the cytoplasm. It carries out the reaction beta-D-fructose 1,6-bisphosphate + H2O = beta-D-fructose 6-phosphate + phosphate. Its pathway is carbohydrate biosynthesis; gluconeogenesis. The polypeptide is Fructose-1,6-bisphosphatase class 1 (Pseudomonas putida (strain ATCC 700007 / DSM 6899 / JCM 31910 / BCRC 17059 / LMG 24140 / F1)).